Here is a 589-residue protein sequence, read N- to C-terminus: Probable methyltransferase PMT23 (589 aa).

Topologically, residues 1-4 (MAIS) are cytoplasmic. A helical; Signal-anchor for type II membrane protein membrane pass occupies residues 5–25 (VQHVVVLLLSTLLIAITFFLF). Residues 26 to 589 (TSDNARFPFP…FWRPAKPELR (564 aa)) are Lumenal-facing. 3 N-linked (GlcNAc...) asparagine glycosylation sites follow: Asn-70, Asn-375, and Asn-442.

It belongs to the methyltransferase superfamily.

It localises to the golgi apparatus membrane. This is Probable methyltransferase PMT23 from Arabidopsis thaliana (Mouse-ear cress).